Reading from the N-terminus, the 405-residue chain is Type III polyketide synthase 10 (405 aa).

Polar residues predominate over residues 1-18; that stretch reads MVSTNAGGIASKQASSMA. Residues 1-20 are disordered; the sequence is MVSTNAGGIASKQASSMAPN. Cysteine 170 acts as the Nucleophile in catalysis.

Belongs to the thiolase-like superfamily. Chalcone/stilbene synthases family. Interacts with STS1. Expressed in adult flowers.

Its subcellular location is the endoplasmic reticulum. Plant type III polyketide synthases (PKSs) that catalyzes the condensation of fatty acyl-CoA with malonyl-CoA to generate triketide and tetraketide alpha-pyrones, the main components of pollen exine and potential sporopollenin precursors. May be involved in the synthesis of sporopollenin precursors in tapetal cells to regulate pollen wall formation. Required for exine and Ubisch body formation in anthers. Does not possess chalcone synthase (CHS) activity in vitro with the substrates 4-coumaroyl-CoA and malonyl-CoA. The chain is Type III polyketide synthase 10 from Oryza sativa subsp. japonica (Rice).